The primary structure comprises 523 residues: Butyrophilin subfamily 2 member A2 (523 aa).

The signal sequence occupies residues 1–32; sequence MEPAAALHFSLPASLLLLLLLLLLSLCALVSA. At 33-265 the chain is on the extracellular side; sequence QFTVVGPANP…AVILTASPWM (233 aa). The 112-residue stretch at 34-145 folds into the Ig-like V-type domain; sequence FTVVGPANPI…SYDEAILRLV (112 aa). N-linked (GlcNAc...) asparagine glycans are attached at residues asparagine 50, asparagine 118, asparagine 220, and asparagine 226. Cysteines 55 and 129 form a disulfide. The region spanning 153 to 234 is the Ig-like C2-type domain; the sequence is PLIEIKAQED…VNNTLLGQEK (82 aa). A helical membrane pass occupies residues 266–286; the sequence is VSMTVILAVFIIFMAVSICCI. The stretch at 286–321 forms a coiled coil; that stretch reads IKKLQREKKILSGEKKVEQEEKEIAQQLQEELRWRR. At 287 to 523 the chain is on the cytoplasmic side; sequence KKLQREKKIL…LHRVGTHQSL (237 aa). One can recognise a B30.2/SPRY domain in the interval 309 to 502; it reads IAQQLQEELR…IFICPALTGA (194 aa).

This sequence belongs to the immunoglobulin superfamily. BTN/MOG family. In terms of processing, N-glycosylated. In terms of tissue distribution, highly expressed in brain, bone marrow, small intestine, muscle, spleen and pancreas. Moderate expression was seen in lung, liver and kidney.

The protein localises to the membrane. In terms of biological role, inhibits the proliferation of CD4 and CD8 T-cells activated by anti-CD3 antibodies, T-cell metabolism and IL2 and IFNG secretion. This Homo sapiens (Human) protein is Butyrophilin subfamily 2 member A2 (BTN2A2).